Here is a 144-residue protein sequence, read N- to C-terminus: Subtilase-type protease inhibitor (144 aa).

An N-terminal signal peptide occupies residues 1-35 (MRNTARWAATLGLTATAVCGPLAGASLASPATAPA). 2 cysteine pairs are disulfide-bonded: cysteine 66-cysteine 81 and cysteine 102-cysteine 132.

It belongs to the protease inhibitor I16 (SSI) family. As to quaternary structure, homodimer.

The protein localises to the secreted. Its function is as follows. Strong inhibitory activity toward subtilisin BPN' and, to a lesser extent, toward trypsin. This chain is Subtilase-type protease inhibitor (sti1), found in Streptomyces coelicolor (strain ATCC BAA-471 / A3(2) / M145).